The primary structure comprises 548 residues: Glucose-6-phosphate isomerase (548 aa).

The active-site Proton donor is glutamate 355. Residues histidine 386 and lysine 514 contribute to the active site.

This sequence belongs to the GPI family.

It localises to the cytoplasm. The catalysed reaction is alpha-D-glucose 6-phosphate = beta-D-fructose 6-phosphate. It functions in the pathway carbohydrate biosynthesis; gluconeogenesis. Its pathway is carbohydrate degradation; glycolysis; D-glyceraldehyde 3-phosphate and glycerone phosphate from D-glucose: step 2/4. Its function is as follows. Catalyzes the reversible isomerization of glucose-6-phosphate to fructose-6-phosphate. This Photorhabdus laumondii subsp. laumondii (strain DSM 15139 / CIP 105565 / TT01) (Photorhabdus luminescens subsp. laumondii) protein is Glucose-6-phosphate isomerase.